The following is a 690-amino-acid chain: Secreted LysM effector Vd5LysM (690 aa).

N4 and N69 each carry an N-linked (GlcNAc...) asparagine glycan. LysM domains are found at residues 203–248 (TQYT…SLCI), 253–301 (DTVT…TLCI), and 341–387 (RWYN…SYCV). N-linked (GlcNAc...) asparagine glycosylation is found at N260, N295, N375, N410, N423, and N492. The disordered stretch occupies residues 523–546 (PATATTGDGGPTPPAPTHSGQPQD). Residues 549 to 596 (TWHVVSSGDSCQSVADDAGISRDQFHDWNPAVGRDCSTNFWLGQAYCV) enclose the LysM 4 domain. The segment covering 606–619 (STVASSTTSSVTPG) has biased composition (low complexity). The interval 606-636 (STVASSTTSSVTPGPSKPEPPGPTHTGQPSD) is disordered. A LysM 5 domain is found at 639 to 686 (EWDVVETGDTCGSLAESNDISLSQFFDWNPAVSRDCVANFWIGQAYCI).

It belongs to the secreted LysM effector family.

In terms of biological role, might have a role in sequestration of chitin oligosaccharides (breakdown products of fungal cell walls that are released during invasion and act as triggers of host immunity) to dampen host defense. Does not play an important role during host colonization. This is Secreted LysM effector Vd5LysM from Verticillium dahliae (strain VdLs.17 / ATCC MYA-4575 / FGSC 10137) (Verticillium wilt).